A 139-amino-acid polypeptide reads, in one-letter code: MDPLSAASKIAGSGLEVQSTRLRIVSENIANARSTGDTPGADPYRRKTVTFGSELDHVSGVERVKVKKLGVDRGDFVHEYDPGNPAADTNGMVKMPNVNVLIEMADMREANRSYDANLQVIRQTRDLVASTIDLLKASQ.

The protein belongs to the flagella basal body rod proteins family. The basal body constitutes a major portion of the flagellar organelle and consists of four rings (L,P,S, and M) mounted on a central rod. The rod consists of about 26 subunits of FlgG in the distal portion, and FlgB, FlgC and FlgF are thought to build up the proximal portion of the rod with about 6 subunits each.

The protein resides in the bacterial flagellum basal body. The polypeptide is Flagellar basal-body rod protein FlgC (flgC) (Agrobacterium fabrum (strain C58 / ATCC 33970) (Agrobacterium tumefaciens (strain C58))).